The sequence spans 338 residues: LINE-1 retrotransposable element ORF1 protein (338 aa).

The segment at 1–40 (MGKKQNRKTGNSKTQSASPPPKERSSSPATEQSWMENDFD) is disordered. 2 stretches are compositionally biased toward polar residues: residues 8-17 (KTGNSKTQSA) and 26-35 (SSPATEQSWM). Residues 49–153 (RSNYSELRED…QSLQEIWDYV (105 aa)) are a coiled coil. The interval 157–252 (NLRLIGVPES…KGKPIRLTAD (96 aa)) is RNA recognition motif (RRM) domain. Residues 253-317 (LSAETLQARR…TTRPALKELL (65 aa)) are C-terminal domain (CTD).

The protein belongs to the transposase 22 family. In terms of assembly, homotrimer (via coiled coil domain). May also form larger homooligomers. May interact with DDX39A, HNRNPA1, SERBP1 and YBX1. Interacts with TEX19 and UBR2. Interacts with MOV10. Interacts with APOBEC3D; this interaction inhibits LINE-1 retrotransposition. Post-translationally, polyubiquitinated, probably by UBR2, which induces its degradation.

Its subcellular location is the nucleus. It is found in the nucleolus. The protein resides in the cytoplasm. It localises to the cytoplasmic ribonucleoprotein granule. The protein localises to the stress granule. Its function is as follows. Nucleic acid-binding protein which is essential for retrotransposition of LINE-1 elements in the genome. Functions as a nucleic acid chaperone binding its own transcript and therefore preferentially mobilizing the transcript from which they are encoded. The chain is LINE-1 retrotransposable element ORF1 protein (L1RE1) from Homo sapiens (Human).